We begin with the raw amino-acid sequence, 394 residues long: Choline/ethanolamine kinase (394 aa).

Positions 1–42 (MAADGTGVVGGGAVGGGLPKDGLQDAKCPEPIPNRRRASSLS) are disordered. Ala2 carries the N-acetylalanine modification. A compositionally biased stretch (gly residues) spans 7 to 19 (GVVGGGAVGGGLP). ATP-binding positions include 75–81 (SGGLSNL), Arg104, 146–152 (QYLPSRP), Gln244, and Asp264. 77 to 79 (GLS) is a binding site for substrate.

Belongs to the choline/ethanolamine kinase family. As to quaternary structure, homodimer, and heterodimer with CHKA. As to expression, expressed ubiquitously with the highest level in testis.

The catalysed reaction is choline + ATP = phosphocholine + ADP + H(+). It carries out the reaction ethanolamine + ATP = phosphoethanolamine + ADP + H(+). It functions in the pathway phospholipid metabolism; phosphatidylethanolamine biosynthesis; phosphatidylethanolamine from ethanolamine: step 1/3. Has a key role in phospholipid metabolism, and catalyzes the first step of phosphatidylethanolamine and phosphatidylcholine biosynthesis. The chain is Choline/ethanolamine kinase (Chkb) from Mus musculus (Mouse).